A 230-amino-acid chain; its full sequence is Ribosomal RNA large subunit methyltransferase E (230 aa).

Residues G76, W78, D99, D115, and D139 each coordinate S-adenosyl-L-methionine. Residue K179 is the Proton acceptor of the active site.

The protein belongs to the class I-like SAM-binding methyltransferase superfamily. RNA methyltransferase RlmE family.

The protein localises to the cytoplasm. It carries out the reaction uridine(2552) in 23S rRNA + S-adenosyl-L-methionine = 2'-O-methyluridine(2552) in 23S rRNA + S-adenosyl-L-homocysteine + H(+). Specifically methylates the uridine in position 2552 of 23S rRNA at the 2'-O position of the ribose in the fully assembled 50S ribosomal subunit. This chain is Ribosomal RNA large subunit methyltransferase E, found in Nitrobacter winogradskyi (strain ATCC 25391 / DSM 10237 / CIP 104748 / NCIMB 11846 / Nb-255).